A 643-amino-acid chain; its full sequence is Threonine--tRNA ligase (643 aa).

One can recognise a TGS domain in the interval 1-61; sequence MPIITLPDGS…SEDATLEIIT (61 aa). The interval 243–534 is catalytic; that stretch reads DHRKIGKALD…ITEEYAGFFP (292 aa). The Zn(2+) site is built by Cys-334, His-385, and His-511.

It belongs to the class-II aminoacyl-tRNA synthetase family. As to quaternary structure, homodimer. Zn(2+) serves as cofactor.

Its subcellular location is the cytoplasm. The catalysed reaction is tRNA(Thr) + L-threonine + ATP = L-threonyl-tRNA(Thr) + AMP + diphosphate + H(+). Its function is as follows. Catalyzes the attachment of threonine to tRNA(Thr) in a two-step reaction: L-threonine is first activated by ATP to form Thr-AMP and then transferred to the acceptor end of tRNA(Thr). Also edits incorrectly charged L-seryl-tRNA(Thr). The polypeptide is Threonine--tRNA ligase (Glaesserella parasuis serovar 5 (strain SH0165) (Haemophilus parasuis)).